The primary structure comprises 363 residues: G-protein coupled receptor 6 (363 aa).

Over 1-75 (MNASAAALNE…SGLLLSAVNP (75 aa)) the chain is Extracellular. 2 N-linked (GlcNAc...) asparagine glycosylation sites follow: Asn2 and Asn9. The disordered stretch occupies residues 29 to 48 (GAPDTGEWGPPAASAALGGG). An N-linked (GlcNAc...) asparagine glycan is attached at Asn52. A helical transmembrane segment spans residues 76 to 95 (WDVLLCVSGTVIAGENALVV). Residues 96-107 (ALIASTPALRTP) are Cytoplasmic-facing. Residues 108–131 (MFVLVGSLATADLLAGCGLILHFV) form a helical membrane-spanning segment. The Extracellular portion of the chain corresponds to 132–143 (FQYVVPSETVSL). Residues 144 to 165 (LMVGFLVASFAASVSSLLAITV) traverse the membrane as a helical segment. Over 166-186 (DRYLSLYNALTYYSRRTLLGV) the chain is Cytoplasmic. A helical membrane pass occupies residues 187–206 (HLLLAATWTVSLGLGLLPVL). Topologically, residues 207-231 (GWNCLADRTSCSVVRPLTRSHVALL) are extracellular. Residues 232–250 (STSFFVVFGIMLHLYVRIC) traverse the membrane as a helical segment. At 251–278 (QVVWRHAHQIALQQHCLAPPHLAATRKG) the chain is on the cytoplasmic side. Residues 279-305 (VGTLAVVLGTFGASWLPFAIYCVVGSQ) traverse the membrane as a helical segment. Residues 306 to 310 (EDPAI) lie on the Extracellular side of the membrane. The chain crosses the membrane as a helical span at residues 311–332 (YTYATLLPATYNSMINPIIYAF). Over 333 to 363 (RNQEIQRALWLLFCGCFQSKVPFRSRSPSEV) the chain is Cytoplasmic. Cys346 carries the S-palmitoyl cysteine lipid modification. Phosphoserine occurs at positions 357, 359, and 361.

Belongs to the G-protein coupled receptor 1 family. As to expression, mainly expressed in the brain. Selectively expressed in striatopallidal neurons in the striatum.

Its subcellular location is the cell membrane. Functionally, orphan receptor with constitutive G(s) signaling activity that activate cyclic AMP. Promotes neurite outgrowth and blocks myelin inhibition in neurons. This Mus musculus (Mouse) protein is G-protein coupled receptor 6 (Gpr6).